The chain runs to 139 residues: Protein spalt-accessory (139 aa).

Positions 1-16 (MKLLIALLALVTAAIA) are cleaved as a signal peptide. Positions 60-75 (GIGQGGVHPGQGGFAG) are enriched in gly residues. Residues 60–139 (GIGQGGVHPG…HHEHHGHHRH (80 aa)) form a disordered region. The segment covering 109–121 (NPHEYPEHHGEHH) has biased composition (basic and acidic residues). Residues 122-139 (REHHEHHGHHEHHGHHRH) are compositionally biased toward basic residues.

The protein resides in the secreted. In terms of biological role, likely to be involved in the establishment of the head. The chain is Protein spalt-accessory (sala) from Drosophila simulans (Fruit fly).